The following is a 230-amino-acid chain: Secretory carrier-associated membrane protein 4 (230 aa).

Over 1–39 (MAGKENNFPPLPHFLPLKPCFYQDFSDEIPVEHQVLVKR) the chain is Cytoplasmic. Transmembrane regions (helical) follow at residues 40 to 60 (IYRL…ACLA), 61 to 81 (WWIA…LVLF), 106 to 126 (MAFF…AIGF), and 149 to 169 (VVML…AITI). Over 170-230 (VKVHRIYRGA…SYSTSGSQWP (61 aa)) the chain is Cytoplasmic. Threonine 194 carries the phosphothreonine modification. Residues 197–230 (NPPSREAQFNSFSGNSLPEYPTVPSYSTSGSQWP) are disordered. 2 stretches are compositionally biased toward polar residues: residues 203 to 212 (AQFNSFSGNS) and 220 to 230 (PSYSTSGSQWP).

This sequence belongs to the SCAMP family.

It is found in the membrane. Functionally, probably involved in membrane protein trafficking. This chain is Secretory carrier-associated membrane protein 4 (Scamp4), found in Rattus norvegicus (Rat).